We begin with the raw amino-acid sequence, 338 residues long: S-adenosylmethionine:tRNA ribosyltransferase-isomerase (338 aa).

Belongs to the QueA family. As to quaternary structure, monomer.

The protein resides in the cytoplasm. The catalysed reaction is 7-aminomethyl-7-carbaguanosine(34) in tRNA + S-adenosyl-L-methionine = epoxyqueuosine(34) in tRNA + adenine + L-methionine + 2 H(+). The protein operates within tRNA modification; tRNA-queuosine biosynthesis. Its function is as follows. Transfers and isomerizes the ribose moiety from AdoMet to the 7-aminomethyl group of 7-deazaguanine (preQ1-tRNA) to give epoxyqueuosine (oQ-tRNA). The sequence is that of S-adenosylmethionine:tRNA ribosyltransferase-isomerase from Carboxydothermus hydrogenoformans (strain ATCC BAA-161 / DSM 6008 / Z-2901).